We begin with the raw amino-acid sequence, 108 residues long: Type III secretion system chaperone SseA (108 aa).

The stretch at 69 to 97 (NQEAEKDLKKIVSLFKQLEVRLKQLNAQA) forms a coiled coil.

Binds to SseB and SseD.

It localises to the cytoplasm. Functions as a type III secretion system (T3SS) chaperone, which is required for SseB and SseD accumulation and secretion. May have a direct role in secretion of SseB and SseD, or may facilitate their correct folding, for efficient secretion and function. Required for survival and replication within epithelial cells and macrophages. This is Type III secretion system chaperone SseA (sseA) from Salmonella typhimurium (strain LT2 / SGSC1412 / ATCC 700720).